Consider the following 489-residue polypeptide: Glucose-6-phosphate 1-dehydrogenase (489 aa).

NADP(+)-binding residues include arginine 50 and lysine 151. Residues histidine 181, lysine 185, glutamate 219, and aspartate 238 each coordinate substrate. Histidine 243 serves as the catalytic Proton acceptor. Residues lysine 341 and lysine 346 each coordinate substrate.

Belongs to the glucose-6-phosphate dehydrogenase family. In terms of assembly, homodimer.

It catalyses the reaction D-glucose 6-phosphate + NADP(+) = 6-phospho-D-glucono-1,5-lactone + NADPH + H(+). It participates in carbohydrate degradation; pentose phosphate pathway; D-ribulose 5-phosphate from D-glucose 6-phosphate (oxidative stage): step 1/3. In terms of biological role, catalyzes the oxidation of glucose 6-phosphate to 6-phosphogluconolactone. The chain is Glucose-6-phosphate 1-dehydrogenase from Gluconobacter oxydans (strain 621H) (Gluconobacter suboxydans).